The following is a 571-amino-acid chain: Phosphoribosylaminoimidazole carboxylase (571 aa).

Residue Ser-37 is modified to Phosphoserine. Residues 110–298 (KEHLIKNGIA…QFEAHLRSIL (189 aa)) form the ATP-grasp domain. 138-193 (GRDLGFPFVLKSRTLAYDGRGNFVVKNKEMIPEALEVLKDRPLYAEKWAPFTKELA) provides a ligand contact to ATP.

This sequence in the C-terminal section; belongs to the AIR carboxylase family. Class I subfamily.

It carries out the reaction 5-amino-1-(5-phospho-D-ribosyl)imidazole-4-carboxylate + H(+) = 5-amino-1-(5-phospho-beta-D-ribosyl)imidazole + CO2. The protein operates within purine metabolism; IMP biosynthesis via de novo pathway; 5-amino-1-(5-phospho-D-ribosyl)imidazole-4-carboxylate from 5-amino-1-(5-phospho-D-ribosyl)imidazole (carboxylase route): step 1/1. The sequence is that of Phosphoribosylaminoimidazole carboxylase (ADE2) from Saccharomyces cerevisiae (strain ATCC 204508 / S288c) (Baker's yeast).